A 1021-amino-acid chain; its full sequence is MARGFTVGFDPLGLGELSSGSLSSVSSRGHLGSDSGSTATRYLLRKQQRLLNGPSRGIRASSPMGRVILINSPIEANSDESDIIHAVRVEKSPSGRLGFSVRGGSEHGLGIFVSKVEEGSSAERAGLCVGDKITEVNGLSLESTTMGSAVRLLTSSSCLHMMVRRMGRVPGIKFSKEKTTWVDVVNRRLVVEKCSSTPSDRSSEDGVRRIVHLYTTSDDFCLGFNIRGGKEFGLGIYVSKVDHGGLAEENGIKVGDQVLAANGVRFDDISHSQAVEVLKGQTHIMLTIKETGRYPAYKEMVSEYCWLDRLSNGVLQQLSPASESSSSVSSYASSAPCSSGSLPSDRMDVCLGPEEPTSHGPGWGRADTAMQTEPDLDSRVETWCSVRPTVILRDTAIRSDGPSSTRHLDSALSESPKTALLLALSRPRTPITRSQSHLTLWEEKKQRKKEKSGSSGEKGALQRSKTLMNLFFKGGRQGRPAGDGHREAWTLDSRSPTKVRPRLDLEKAGSVGPVQKFVTWRLRRDRERGRALLSARSGSPSGQAPTVNEQVQAWESRRPLIQDLARRLLTDDEVLAVTRHCSRYVHEGGVEDLVRPLLAILDRPTKLLLLRDIRSVVAPTDLGRFDSMVMPVELEAFEALKSRAVGPSALRPTRQDTPPKRHLITPVPDSRGGFYLLPVNSSEDEDGEIREKLGVLKVSLGASAPHHKGIPPLQDVPVDAFSLRRGACAPPPQPPPVAPRPPRPNWLLTEPLSREDTQQNQSQTPAQSCSRSRSRSRSRSHSRGQGKSPGRRRSPSPAPIATAATANGRYHRPRKARPLLPRLLDGQVAKVGARQGPLENGRIAEEAVGNVSTGALRTITLSKMKQSLGISISGGIESKVQPMVKIEKIFPGGAAFLCGDLQAGFELVAVDGESLEQVTHQRAVDTIRRAYRNKAREPMELVVRVPGPGLLPLASDLRVVKDQSLAPDCPSALGPVDDARILTQLPPPEARQLQQSLSSALKVPQSIPKLSPILKDPHDPS.

PDZ domains are found at residues 86–156 and 210–279; these read AVRV…LTSS and IVHL…EVLK. Low complexity predominate over residues 324–344; it reads SSSSVSSYASSAPCSSGSLPS. Disordered regions lie at residues 324–345, 431–495, and 724–814; these read SSSS…LPSD, ITRS…DSRS, and RRGA…HRPR. Positions 729–744 are enriched in pro residues; it reads APPPQPPPVAPRPPRP. The span at 758-767 shows a compositional bias: polar residues; that stretch reads QQNQSQTPAQ. Over residues 772–794 the composition is skewed to basic residues; that stretch reads SRSRSRSRSHSRGQGKSPGRRRS. The segment covering 799–808 has biased composition (low complexity); that stretch reads PIATAATANG. The 73-residue stretch at 858–930 folds into the PDZ 3 domain; it reads TITLSKMKQS…QRAVDTIRRA (73 aa). A disordered region spans residues 992-1021; the sequence is QLQQSLSSALKVPQSIPKLSPILKDPHDPS.

In terms of assembly, homodimerizes (via PDZ2 domain). Component of USH2 complex, composed of ADGRV1, PDZD7, USH2A and WHRN. Interacts (via PDZ domains) with WHRN; the interaction is direct. Interacts with USH1G. Interacts with ADGRV1 (via the cytoplasmic region). Interacts with USH2A (via the cytoplasmic region). Interacts with MYO7A (via MyTH4-FERM domains). In terms of tissue distribution, isoform 1 is expressed in developing and adult cochlea but not retina. Isoform 2 is expressed in developing and adult cochlea and retina. Isoform 3 is expressed in adult cochlea and retina. Isoform 4 is expressed in retina and developing cochlea but not adult cochlea. Isoform 5 is expressed in adult cochlea but not in developing cochlea or retina.

It localises to the cell projection. It is found in the cilium. Its subcellular location is the nucleus. The protein localises to the stereocilium. Functionally, in cochlear developing hair cells, essential in organizing the USH2 complex at stereocilia ankle links. Blocks inhibition of adenylate cyclase activity mediated by ADGRV1. The polypeptide is PDZ domain-containing protein 7 (Mus musculus (Mouse)).